Consider the following 201-residue polypeptide: Lipopolysaccharide core heptose(II)-phosphate phosphatase (201 aa).

The first 35 residues, 1 to 35 (MLAFTLRFIKNKRYFAILAGALVIIAGLTSQHAWS), serve as a signal peptide directing secretion.

This sequence belongs to the phosphoglycerate mutase family. Ais subfamily.

Its subcellular location is the periplasm. It functions in the pathway bacterial outer membrane biogenesis; lipopolysaccharide metabolism. Catalyzes the dephosphorylation of heptose(II) of the outer membrane lipopolysaccharide core. In Salmonella enteritidis PT4 (strain P125109), this protein is Lipopolysaccharide core heptose(II)-phosphate phosphatase.